Here is a 164-residue protein sequence, read N- to C-terminus: DNA-directed RNA polymerase 19 kDa subunit (164 aa).

Over residues 1-35 (MADTDDIIDYESDDLTEYEDDDEEEEDGESLETSD) the composition is skewed to acidic residues. Residues 1–39 (MADTDDIIDYESDDLTEYEDDDEEEEDGESLETSDIDPK) are disordered.

This sequence belongs to the poxviridae DNA-directed RNA polymerase 19 kDa subunit family. The DNA-dependent RNA polymerase used for intermediate and late genes expression consists of eight subunits Rpo30/OPG66, Rpo7/OPG90, Rpo22/OPG103, Rpo147/OPG105, Rpo18/OPG119, Rpo19/OPG131, Rpo132/OPG151 and Rpo35/OPG156. The same holoenzyme, with the addition of the transcription-specificity factor OPG109, is used for early gene expression.

The protein resides in the virion. It carries out the reaction RNA(n) + a ribonucleoside 5'-triphosphate = RNA(n+1) + diphosphate. Functionally, part of the DNA-dependent RNA polymerase which catalyzes the transcription of viral DNA into RNA using the four ribonucleoside triphosphates as substrates. Responsible for the transcription of early, intermediate and late genes. DNA-dependent RNA polymerase associates with the early transcription factor (ETF), itself composed of OPG118 and OPG133, thereby allowing the early genes transcription. Late transcription, and probably also intermediate transcription, require newly synthesized RNA polymerase. This is DNA-directed RNA polymerase 19 kDa subunit (OPG131) from Variola virus (isolate Human/India/Ind3/1967) (VARV).